The sequence spans 118 residues: UPF0102 protein Csac_2148 (118 aa).

It belongs to the UPF0102 family.

The sequence is that of UPF0102 protein Csac_2148 from Caldicellulosiruptor saccharolyticus (strain ATCC 43494 / DSM 8903 / Tp8T 6331).